Reading from the N-terminus, the 78-residue chain is Consomatin Nc1 (78 aa).

Residues 1-22 form the signal peptide; that stretch reads MQTAYWVMVMVMVWITAPLSEG. Positions 23 to 59 are excised as a propeptide; it reads GKPNDVIRGLVPDDLTPQLILRSLISRRRSDKDVGKR. The residue at position 61 (Glu-61) is a 4-carboxyglutamate. Cys-62 and Cys-67 are joined by a disulfide. Trp-64 carries the post-translational modification D-tryptophan. At Pro-70 the chain carries 4-hydroxyproline. A propeptide spanning residues 71-78 is cleaved from the precursor; that stretch reads LSRRHDLG.

Belongs to the conotoxin C superfamily. Consomatin family. Expressed by the venom duct.

The protein localises to the secreted. In terms of biological role, moderately activates human somatostatin receptors (SSTR) with a preferential activation of SSTR1 and SSTR4. In vivo, does not cause behavioral changes in mice within a few minutes of intracranial injection, but causes a progressive loss of movement thereafter. Four to five hours after injection, mice recover, even with the highest dose tested. Shows antinociception and antihyperalgesia activities in two mouse models of acute pain, most probably by acting outside the central nervous system. This Conus neocostatus (Cone snail) protein is Consomatin Nc1.